The primary structure comprises 610 residues: DNA mismatch repair protein MutL (610 aa).

It belongs to the DNA mismatch repair MutL/HexB family.

Functionally, this protein is involved in the repair of mismatches in DNA. It is required for dam-dependent methyl-directed DNA mismatch repair. May act as a 'molecular matchmaker', a protein that promotes the formation of a stable complex between two or more DNA-binding proteins in an ATP-dependent manner without itself being part of a final effector complex. This chain is DNA mismatch repair protein MutL, found in Rickettsia canadensis (strain McKiel).